Reading from the N-terminus, the 34-residue chain is MEVNILAFIATALFILVPTAFLLIIYVKTVSQNN.

The chain crosses the membrane as a helical span at residues 5-25; that stretch reads ILAFIATALFILVPTAFLLII.

Belongs to the PsbM family. As to quaternary structure, PSII is composed of 1 copy each of membrane proteins PsbA, PsbB, PsbC, PsbD, PsbE, PsbF, PsbH, PsbI, PsbJ, PsbK, PsbL, PsbM, PsbT, PsbX, PsbY, PsbZ, Psb30/Ycf12, at least 3 peripheral proteins of the oxygen-evolving complex and a large number of cofactors. It forms dimeric complexes.

Its subcellular location is the plastid. The protein resides in the chloroplast thylakoid membrane. Its function is as follows. One of the components of the core complex of photosystem II (PSII). PSII is a light-driven water:plastoquinone oxidoreductase that uses light energy to abstract electrons from H(2)O, generating O(2) and a proton gradient subsequently used for ATP formation. It consists of a core antenna complex that captures photons, and an electron transfer chain that converts photonic excitation into a charge separation. This subunit is found at the monomer-monomer interface. The chain is Photosystem II reaction center protein M from Coffea arabica (Arabian coffee).